A 532-amino-acid polypeptide reads, in one-letter code: Probable cytochrome c oxidase subunit 1 (532 aa).

8 helical membrane-spanning segments follow: residues 33-53, 74-94, 95-115, 118-138, 163-183, 200-220, 252-272, and 284-304; these read IMYIIFAIFAGIVGGLFSLLF, VLITAHAVIMVFFMIMPALFG, GFGNYFVPLLIGAPDMAFPRL, ISFWLLVPAFILLMGSAFVDG, MAIFSLHLTGLSSILGSINLI, PLFVWSILVTAFLIILAMPVL, LFWFFGHPEVYIVILPGFGIV, and IFGYQGMVGAMVIIGFVGFIV. Position 79 (histidine 79) interacts with Fe(II)-heme a. 2 residues coordinate Cu cation: histidine 258 and tyrosine 262. Cu cation contacts are provided by histidine 307 and histidine 308. A run of 2 helical transmembrane segments spans residues 318 to 338 and 355 to 375; these read ALIYFTAGTMIIAIPTGIKIF and MLFSIGFIILFTIGGVTGIIL. Histidine 393 serves as a coordination point for heme a3. 3 helical membrane passes run 394–414, 431–451, and 473–493; these read FHYTMSLGALFTAFAGFYYWF, FWITFVGVNLTFFPQHFLGLA, and IGAGISMAAALYFVFIVFYTL. Residue histidine 395 coordinates Fe(II)-heme a.

This sequence belongs to the heme-copper respiratory oxidase family.

It localises to the cell membrane. It carries out the reaction 4 Fe(II)-[cytochrome c] + O2 + 8 H(+)(in) = 4 Fe(III)-[cytochrome c] + 2 H2O + 4 H(+)(out). It functions in the pathway energy metabolism; oxidative phosphorylation. Cytochrome c oxidase is the component of the respiratory chain that catalyzes the reduction of oxygen to water. Subunits 1-3 form the functional core of the enzyme complex. CO I is the catalytic subunit of the enzyme. Electrons originating in cytochrome c are transferred via the copper A center of subunit 2 and heme A of subunit 1 to the bimetallic center formed by heme A3 and copper B. In Rickettsia bellii (strain RML369-C), this protein is Probable cytochrome c oxidase subunit 1 (ctaD).